The primary structure comprises 343 residues: TATA box-binding protein-like 2 (343 aa).

The segment at 71–152 (PDEVTQENKD…SDSLSLASIT (82 aa)) is disordered. The span at 76–90 (QENKDQPVISKHETE) shows a compositional bias: basic and acidic residues. Over residues 94–127 (ESQSPQSRLPSPSEQDVGLGLNSSSLSNSHSQLH) the composition is skewed to low complexity. Residues 143 to 152 (SDSLSLASIT) are compositionally biased toward polar residues.

It belongs to the TBP family. Interacts with TAF3. As to expression, ubiquitously expressed in all tissues examined with highest levels in heart, lung, ovary, spleen and testes.

It is found in the cytoplasm. The protein resides in the nucleus. Transcription factor required in complex with TAF3 for the differentiation of myoblasts into myocytes. The complex replaces TFIID at specific promoters at an early stage in the differentiation process. This is TATA box-binding protein-like 2 from Homo sapiens (Human).